A 306-amino-acid chain; its full sequence is MTASLHIILDTDPGIDDAAAIAAALFAPELDLQLITTVAGNVSVEKTTRNALQLLHFWDADVPLAQGAATPLLRPLRDAAYVHGESGMEGYDFVDHQRQPLAKPAFIAIRDVLMNAPEPMTLVAIGPLTNIALLLMHYPECACNIRRLVLMGGSAGRGNFTPNAEFNIAVDPEAAAHVFRSGIEIVMCGLDVTNQAMLSPDFLSKLPALNRTGKMLHSLFNHYRSGSMRTGVRMHDLCAIAWLVRPELFTLQSCFVAVETQGQYTAGTTVVDIEGRLGQPANAQVALALDVDGFRQWVAEVFACAP.

The active site involves histidine 235.

It belongs to the IUNH family. RihC subfamily.

Functionally, hydrolyzes both purine and pyrimidine ribonucleosides with a broad-substrate specificity. This Salmonella agona (strain SL483) protein is Non-specific ribonucleoside hydrolase RihC.